A 102-amino-acid polypeptide reads, in one-letter code: PE family immunomodulator PE5 (102 aa).

One can recognise a PE domain in the interval 3–92; that stretch reads LRVVPEGLAA…GASYLAGDAA (90 aa).

The protein belongs to the mycobacterial PE family.

It is found in the secreted. The protein resides in the cell envelope. The protein localises to the cell surface. Important for the siderophore-mediated iron-acquisition function of ESX-3. May play a pivotal role in the evasion of host immune response by M.tuberculosis. Mediates production of IL-10 via activation of the p38 and ERK1/2 mitogen-activated protein kinase (MAPK) signaling pathways. In Mycobacterium tuberculosis (strain ATCC 25618 / H37Rv), this protein is PE family immunomodulator PE5.